A 390-amino-acid chain; its full sequence is Transposase for insertion sequence element IS256 in transposon Tn4001 (390 aa).

The protein belongs to the transposase mutator family.

In terms of biological role, required for the transposition of the insertion element. This is Transposase for insertion sequence element IS256 in transposon Tn4001 from Enterococcus faecalis (strain ATCC 700802 / V583).